The sequence spans 357 residues: MSKRLLILEDGTIFEGEALGANLDVTGELVFNTGMTGYQESITDQSYNGQILTFTYPIVGNYGVNRDDYESIHPTCKAVVVHEAARRPSNWRMQMSFDEFLKSKNIPGITGVDTRAITKIVREHGTMKASLVQARDEVDHQMSQLQATVLPTNQVETSSTATAYPSPNTGRKVVVVDFGLKHSILRELSKRECNLTVVPYNTSAKEILEMEPDGVMLTNGPGDPTDVPEAIEMIKEVQGKIPIFGICLGHQLFSLANGATTYKMKFGHRGFNHAVREVATGRIDFTSQNHGYAVSSENLPEDLMITHVEINDNSVEGVRHKYFPAFSVQFHPDAAPGPHDASYLFDDFMDLMDNFKK.

Residues 1–168 (MSKRLLILED…STATAYPSPN (168 aa)) are CPSase. L-glutamine is bound by residues serine 46, glycine 220, and glycine 222. Positions 172–357 (KVVVVDFGLK…FMDLMDNFKK (186 aa)) constitute a Glutamine amidotransferase type-1 domain. Catalysis depends on cysteine 247, which acts as the Nucleophile. The L-glutamine site is built by leucine 248, glutamine 251, asparagine 289, glycine 291, and tyrosine 292. Residues histidine 331 and aspartate 333 contribute to the active site.

Belongs to the CarA family. As to quaternary structure, composed of two chains; the small (or glutamine) chain promotes the hydrolysis of glutamine to ammonia, which is used by the large (or ammonia) chain to synthesize carbamoyl phosphate. Tetramer of heterodimers (alpha,beta)4.

The catalysed reaction is hydrogencarbonate + L-glutamine + 2 ATP + H2O = carbamoyl phosphate + L-glutamate + 2 ADP + phosphate + 2 H(+). It carries out the reaction L-glutamine + H2O = L-glutamate + NH4(+). It functions in the pathway amino-acid biosynthesis; L-arginine biosynthesis; carbamoyl phosphate from bicarbonate: step 1/1. The protein operates within pyrimidine metabolism; UMP biosynthesis via de novo pathway; (S)-dihydroorotate from bicarbonate: step 1/3. Its function is as follows. Small subunit of the glutamine-dependent carbamoyl phosphate synthetase (CPSase). CPSase catalyzes the formation of carbamoyl phosphate from the ammonia moiety of glutamine, carbonate, and phosphate donated by ATP, constituting the first step of 2 biosynthetic pathways, one leading to arginine and/or urea and the other to pyrimidine nucleotides. The small subunit (glutamine amidotransferase) binds and cleaves glutamine to supply the large subunit with the substrate ammonia. In Lactococcus lactis subsp. cremoris (strain MG1363), this protein is Carbamoyl phosphate synthase small chain.